The chain runs to 251 residues: Flap endonuclease Xni (251 aa).

Asp-104 provides a ligand contact to Mg(2+). Residues 160–249 (VLPQQLPDYW…IDGNLQQLRL (90 aa)) enclose the 5'-3' exonuclease domain. Leu-171, Ala-172, Pro-180, Val-182, and Ile-185 together coordinate K(+). Positions 184 to 189 (GIGPKS) are interaction with DNA.

This sequence belongs to the Xni family. The cofactor is Mg(2+). K(+) serves as cofactor.

Its function is as follows. Has flap endonuclease activity. During DNA replication, flap endonucleases cleave the 5'-overhanging flap structure that is generated by displacement synthesis when DNA polymerase encounters the 5'-end of a downstream Okazaki fragment. This is Flap endonuclease Xni from Citrobacter koseri (strain ATCC BAA-895 / CDC 4225-83 / SGSC4696).